The sequence spans 112 residues: uncharacterized protein (112 aa).

Coiled coils occupy residues 15 to 53 (AEKKISEERRESTTQTAEELKVPSMEKELEELRREFFKF) and 86 to 103 (LDYEIKVLEERVKETERK).

This is an uncharacterized protein from Aquifex aeolicus (strain VF5).